Consider the following 944-residue polypeptide: Neutral alpha-glucosidase AB (944 aa).

The signal sequence occupies residues 1 to 32 (MAAIAAVAARRRRSWLSLVLAYLGVCLGITLA). Cys41 and Cys47 form a disulfide bridge. At Ser52 the chain carries Phosphoserine. N-linked (GlcNAc...) asparagine glycosylation occurs at Asn97. A disordered region spans residues 180–238 (HQRAPRVPQESKDPAEGNGAQPEATPGDGDKPEETQEKAEKDEPGAWEETFKTHSDSKP). Residues 207 to 236 (DGDKPEETQEKAEKDEPGAWEETFKTHSDS) show a composition bias toward basic and acidic residues. Positions 283 and 429 each coordinate substrate. The Nucleophile role is filled by Asp542. Arg602 is a substrate binding site. Catalysis depends on Asp618, which acts as the Proton donor. Residues Cys633 and Cys644 are joined by a disulfide bond. His676 is a binding site for substrate.

The protein belongs to the glycosyl hydrolase 31 family. In terms of assembly, heterodimer of a catalytic alpha subunit (GANAB) and a beta subunit (PRKCSH). Binds glycosylated PTPRC.

The protein resides in the endoplasmic reticulum. It is found in the golgi apparatus. The protein localises to the melanosome. It catalyses the reaction N(4)-(alpha-D-Glc-(1-&gt;3)-alpha-D-Man-(1-&gt;2)-alpha-D-Man-(1-&gt;2)-alpha-D-Man-(1-&gt;3)-[alpha-D-Man-(1-&gt;2)-alpha-D-Man-(1-&gt;3)-[alpha-D-Man-(1-&gt;2)-alpha-D-Man-(1-&gt;6)]-alpha-D-Man-(1-&gt;6)]-beta-D-Man-(1-&gt;4)-beta-D-GlcNAc-(1-&gt;4)-beta-D-GlcNAc)-L-asparaginyl-[protein] + H2O = N(4)-(alpha-D-Man-(1-&gt;2)-alpha-D-Man-(1-&gt;2)-alpha-D-Man-(1-&gt;3)-[alpha-D-Man-(1-&gt;2)-alpha-D-Man-(1-&gt;3)-[alpha-D-Man-(1-&gt;2)-alpha-D-Man-(1-&gt;6)]-alpha-D-Man-(1-&gt;6)]-beta-D-Man-(1-&gt;4)-beta-D-GlcNAc-(1-&gt;4)-beta-D-GlcNAc)-L-asparaginyl-[protein] (N-glucan mannose isomer 9A1,2,3B1,2,3) + beta-D-glucose. The catalysed reaction is N(4)-(alpha-D-Glc-(1-&gt;3)-alpha-D-Glc-(1-&gt;3)-alpha-D-Man-(1-&gt;2)-alpha-D-Man-(1-&gt;2)-alpha-D-Man-(1-&gt;3)-[alpha-D-Man-(1-&gt;2)-alpha-D-Man-(1-&gt;3)-[alpha-D-Man-(1-&gt;2)-alpha-D-Man-(1-&gt;6)]-alpha-D-Man-(1-&gt;6)]-beta-D-Man-(1-&gt;4)-beta-D-GlcNAc-(1-&gt;4)-beta-D-GlcNAc)-L-asparaginyl-[protein] + H2O = N(4)-(alpha-D-Glc-(1-&gt;3)-alpha-D-Man-(1-&gt;2)-alpha-D-Man-(1-&gt;2)-alpha-D-Man-(1-&gt;3)-[alpha-D-Man-(1-&gt;2)-alpha-D-Man-(1-&gt;3)-[alpha-D-Man-(1-&gt;2)-alpha-D-Man-(1-&gt;6)]-alpha-D-Man-(1-&gt;6)]-beta-D-Man-(1-&gt;4)-beta-D-GlcNAc-(1-&gt;4)-beta-D-GlcNAc)-L-asparaginyl-[protein] + beta-D-glucose. It participates in glycan metabolism; N-glycan metabolism. Its function is as follows. Catalytic subunit of glucosidase II that cleaves sequentially the 2 innermost alpha-1,3-linked glucose residues from the Glc(2)Man(9)GlcNAc(2) oligosaccharide precursor of immature glycoproteins. Required for PKD1/Polycystin-1 and PKD2/Polycystin-2 maturation and localization to the cell surface and cilia. The sequence is that of Neutral alpha-glucosidase AB from Mus musculus (Mouse).